The chain runs to 85 residues: Growth factor (85 aa).

The N-terminal stretch at 1-19 is a signal peptide; sequence MVPRDLVATLLCAMCIVQA. Positions 33–77 constitute an EGF-like domain; it reads RIKLCNDDYKNYCLNNGTCFTVALNNVSLNPFCACHINYVGSRCQ. Cystine bridges form between cysteine 37/cysteine 51, cysteine 45/cysteine 65, and cysteine 67/cysteine 76. Asparagine 48 and asparagine 58 each carry an N-linked (GlcNAc...) asparagine; by host glycan.

It is found in the secreted. In terms of biological role, stimulates the growth of some tissues. The protein is Growth factor (MGF) of Oryctolagus cuniculus (Rabbit).